The primary structure comprises 1003 residues: NACHT, LRR and PYD domains-containing protein 9B (1003 aa).

Positions 1-91 (MAGSSGYGLL…SIMAQKKKRH (91 aa)) constitute a Pyrin domain. The NACHT domain occupies 143 to 465 (VTAIVAGTTG…QDKDICVPVI (323 aa)). Residue 149 to 156 (GTTGEGKT) coordinates ATP. LRR repeat units lie at residues 749-770 (KVKHLSLVENPLKNKGVMSLCE), 778-799 (VLQSLMLSYCCLTFIACGHLYE), 806-826 (HLSLLDLGSNFLEDTGVNLLC), 835-856 (TLKELWLPGCFLTSQCCEEISA), 863-883 (NLKTLKLGNNNIQDTGVRQLC), 892-913 (NLECLGLDLCEFTSDCCKDLAL), and 920-940 (TLNSLNLDWKTLDHSGLVVLC).

Sensor component of NLRP9 inflammasomes. Inflammasomes are supramolecular complexes that assemble in the cytosol in response to pathogens, such as rotavirus, but not encephalomyocarditis virus (EMCV), and play critical roles in innate immunity and inflammation. The core of NLRP9 inflammasomes consists of a signal sensor component (NLRP9), an adapter (ASC/PYCARD), which recruits an effector pro-inflammatory caspase (CASP1). Within the complex, NLRP9 and PYCARD interact via their respective DAPIN/pyrin domains. This interaction initiates speck formation (nucleation) which greatly enhances further addition of soluble PYCARD molecules to the speck in a prion-like polymerization process. Clustered PYCARD nucleates the formation of CASP1 filaments through the interaction of their respective CARD domains, acting as a platform for CASP1 polymerization. CASP1 filament formation increases local enzyme concentration, resulting in trans-autocleavage and activation. Active CASP1 then processes IL1B and IL18 precursors, leading to the release of mature cytokines in the extracellular milieu and inflammatory response. Interacts with DHX9 upon rotavirus infection; this interaction may trigger inflammasome activation and inflammatory response. As to expression, predominantly expressed in the intestine, including proximal and distal colon, cecum, ileum, jejunum and duodenum (at protein level). In the ileum, expressed in epithelial cells. Also expressed in oocytes at all follicular stages and in preimplantation embryos (at protein level). Although expression decreases in preimplantation embryos, it is still detectable in blastocyts.

The protein localises to the cytoplasm. It localises to the inflammasome. Its function is as follows. As the sensor component of the NLRP9 inflammasome, plays a crucial role in innate immunity and inflammation. In response to pathogens, including rotavirus, initiates the formation of the inflammasome polymeric complex, made of NLRP9, PYCARD and CASP1. Recruitment of proCASP1 to the inflammasome promotes its activation and CASP1-catalyzed IL1B and IL18 maturation and release in the extracellular milieu. The active cytokines stimulate inflammatory responses. Inflammasomes can also induce pyroptosis, an inflammatory form of programmed cell death. NLRP9 inflammasome activation may be initiated by DHX9 interaction with viral double-stranded RNA (dsRNA), preferentially to short dsRNA segments. The protein is NACHT, LRR and PYD domains-containing protein 9B (Nlrp9b) of Mus musculus (Mouse).